A 418-amino-acid polypeptide reads, in one-letter code: L-methionine/branched-chain amino acid exporter YjeH (418 aa).

Residues 1–15 (MSGLKQELGLAQGIG) are Periplasmic-facing. A helical transmembrane segment spans residues 16-36 (LLSTSLLGTGVFAVPALAALV). At 37-41 (AGNNS) the chain is on the cytoplasmic side. Residues 42-62 (LWAWPVLIILVFPIAIVFAIL) traverse the membrane as a helical segment. The Periplasmic segment spans residues 63-89 (GRHYPSAGGVAHFVGMAFGSRLERVTG). A helical transmembrane segment spans residues 90–110 (WLFLSVIPVGLPAALQIAAGF). Topologically, residues 111–113 (GQA) are cytoplasmic. The helical transmembrane segment at 114-134 (MFGWHSWQLLLAELGTLALVW) threads the bilayer. The Periplasmic portion of the chain corresponds to 135–147 (YIGTRGASSSANL). A helical membrane pass occupies residues 148-168 (QTVIAGLIVALIVAIWWAGDI). The Cytoplasmic segment spans residues 169–182 (KPANIPFPAPGNIE). Residues 183 to 203 (LTGLFAALSVMFWCFVGLEAF) form a helical membrane-spanning segment. The Periplasmic segment spans residues 204 to 219 (AHLASEFKNPERDFPR). The chain crosses the membrane as a helical span at residues 220–240 (ALMIGLLLAGLVYWGCTVVVL). The Cytoplasmic portion of the chain corresponds to 241-257 (HFDAYGEKMAAAASLPK). The chain crosses the membrane as a helical span at residues 258–278 (IVVQLFGVGALWIACVIGYLA). Over 279 to 317 (CFASLNIYIQSFARLVWSQAQHNPDHYLARLSSRHIPNN) the chain is Periplasmic. Residues 318-338 (ALNAVLGCCVVSTLVIHALEI) traverse the membrane as a helical segment. Over 339 to 341 (NLD) the chain is Cytoplasmic. A helical transmembrane segment spans residues 342–362 (ALIIYANGIFIMIYLLCMLAG). Over 363–378 (CKLLQGRYRLLAVVGG) the chain is Periplasmic. A helical membrane pass occupies residues 379-399 (LLCVLLLAMVGWKSLYALIML). Over 400–418 (AGLWLLLPKRKTPENGITT) the chain is Cytoplasmic.

It belongs to the amino acid-polyamine-organocation (APC) superfamily. Amino acid efflux (AAE) (TC 2.A.3.13) family.

The protein localises to the cell inner membrane. The enzyme catalyses L-methionine(in) + H(+)(out) = L-methionine(out) + H(+)(in). It catalyses the reaction L-leucine(in) + H(+)(out) = L-leucine(out) + H(+)(in). The catalysed reaction is L-isoleucine(in) + H(+)(out) = L-isoleucine(out) + H(+)(in). It carries out the reaction L-valine(in) + H(+)(out) = L-valine(out) + H(+)(in). Efflux of L-methionine is inhibited by the proton ionophore carbonyl cyanide m-chlorophenylhydrazone (CCCP). Its function is as follows. Catalyzes the efflux of L-methionine, L-leucine, L-isoleucine and L-valine. Activity is dependent on electrochemical potential. In Escherichia coli (strain K12), this protein is L-methionine/branched-chain amino acid exporter YjeH (yjeH).